Reading from the N-terminus, the 85-residue chain is Small ribosomal subunit protein bS18 (85 aa).

The protein belongs to the bacterial ribosomal protein bS18 family. Part of the 30S ribosomal subunit. Forms a tight heterodimer with protein bS6.

Binds as a heterodimer with protein bS6 to the central domain of the 16S rRNA, where it helps stabilize the platform of the 30S subunit. This chain is Small ribosomal subunit protein bS18, found in Helicobacter pylori (strain P12).